We begin with the raw amino-acid sequence, 596 residues long: Succinate dehydrogenase flavoprotein subunit (596 aa).

Residues 18 to 23 (GAGGAG), 41 to 56 (TKLF…AQGG), and D225 each bind FAD. Residue H49 is modified to Tele-8alpha-FAD histidine. Residues H246 and T258 each coordinate substrate. Catalysis depends on R290, which acts as the Proton acceptor. Substrate is bound at residue H357. Residue E391 participates in FAD binding. Residue R402 coordinates substrate. 407–408 (SL) is an FAD binding site.

Belongs to the FAD-dependent oxidoreductase 2 family. FRD/SDH subfamily. In terms of assembly, part of an enzyme complex containing four subunits: a flavoprotein, an iron-sulfur, cytochrome b-556, and a hydrophobic anchor protein. Requires FAD as cofactor.

It is found in the cell inner membrane. It catalyses the reaction a quinone + succinate = fumarate + a quinol. The protein operates within carbohydrate metabolism; tricarboxylic acid cycle; fumarate from succinate (bacterial route): step 1/1. This chain is Succinate dehydrogenase flavoprotein subunit (sdhA), found in Rickettsia felis (strain ATCC VR-1525 / URRWXCal2) (Rickettsia azadi).